Here is a 556-residue protein sequence, read N- to C-terminus: Vetispiradiene synthase 1 (556 aa).

Mg(2+)-binding residues include aspartate 309, aspartate 313, aspartate 452, threonine 456, and glutamate 460. The DDXXD motif signature appears at 309-313 (DDTFD).

Belongs to the terpene synthase family. Tpsa subfamily. Mg(2+) serves as cofactor.

It is found in the cytoplasm. The catalysed reaction is (2E,6E)-farnesyl diphosphate = (-)-vetispiradiene + diphosphate. It participates in secondary metabolite biosynthesis; terpenoid biosynthesis. In terms of biological role, sesquiterpene synthase that catalyzes the formation of vetispiradiene from trans,trans-farnesyl diphosphate. The initial internal cyclization produces the monocyclic intermediate germacrene A. In Solanum tuberosum (Potato), this protein is Vetispiradiene synthase 1 (PVS1).